Consider the following 261-residue polypeptide: Chanoclavine-I dehydrogenase easD (261 aa).

NADP(+)-binding residues include Ile-18, Lys-48, Asp-66, Arg-132, Tyr-166, Lys-170, and Thr-201. Tyr-166 serves as the catalytic Proton donor. Lys-170 (lowers pKa of active site Tyr) is an active-site residue.

This sequence belongs to the short-chain dehydrogenases/reductases (SDR) family.

It catalyses the reaction chanoclavine-I + NAD(+) = chanoclavine-I aldehyde + NADH + H(+). It functions in the pathway alkaloid biosynthesis; ergot alkaloid biosynthesis. Its function is as follows. Chanoclavine-I dehydrogenase; part of the gene cluster that mediates the biosynthesis of fumiclavanine C, a fungal ergot alkaloid. DmaW catalyzes the first step of ergot alkaloid biosynthesis by condensing dimethylallyl diphosphate (DMAP) and tryptophan to form 4-dimethylallyl-L-tryptophan. The second step is catalyzed by the methyltransferase easF that methylates 4-dimethylallyl-L-tryptophan in the presence of S-adenosyl-L-methionine, resulting in the formation of 4-dimethylallyl-L-abrine. The catalase easC and the FAD-dependent oxidoreductase easE then transform 4-dimethylallyl-L-abrine to chanoclavine-I which is further oxidized by EasD in the presence of NAD(+), resulting in the formation of chanoclavine-I aldehyde. EasA reduces chanoclavine-I aldehyde to dihydrochanoclavine-I aldehyde that spontaneously dehydrates to form 6,8-dimethyl-6,7-didehydroergoline. EasG then catalyzes the reduction of 6,8-dimethyl-6,7-didehydroergoline to form festuclavine. Hydrolysis of festuclavine by easM then leads to the formation of fumigaclavine B which is in turn acetylated by easN to fumigaclavine A. Finally, easL catalyzes the conversion of fumigaclavine A into fumigaclavine C by attaching a dimethylallyl moiety to C-2 of the indole nucleus. The sequence is that of Chanoclavine-I dehydrogenase easD from Aspergillus fumigatus (strain ATCC MYA-4609 / CBS 101355 / FGSC A1100 / Af293) (Neosartorya fumigata).